Reading from the N-terminus, the 83-residue chain is Small ribosomal subunit protein eS21 (83 aa).

The protein belongs to the eukaryotic ribosomal protein eS21 family. In terms of assembly, component of the 40S small ribosomal subunit.

The protein localises to the cytoplasm. The protein resides in the cytosol. Its subcellular location is the rough endoplasmic reticulum. This is Small ribosomal subunit protein eS21 (RpS21) from Spodoptera frugiperda (Fall armyworm).